The chain runs to 277 residues: MALKKYKPITNGRRNMTSLDFAEITKSTPEKSLLQPLPKKAGRNNQGKLTVRHHGGGHKRQYRVIDFKRNKDGITAKVDSIQYDPNRSANIALLVYADGEKRYIIAPKGLQVGQVVESGADADIKVGNALPLQNIPVGTVIHNIELKPGKGGQLARSAGASSQVLGKEGKYVLIRLRSGEVRMILSTCRATIGQVGNLQHELVNVGKAGRSRWKGIRPTVRGSVMNPNDHPHGGGEGRAPIGRPSPMSPWGKPTLGKKTRRGKKSSDKLIVRGRKKK.

Disordered stretches follow at residues 34 to 55 and 213 to 277; these read LQPL…RHHG and WKGI…RKKK.

The protein belongs to the universal ribosomal protein uL2 family. Part of the 50S ribosomal subunit. Forms a bridge to the 30S subunit in the 70S ribosome.

One of the primary rRNA binding proteins. Required for association of the 30S and 50S subunits to form the 70S ribosome, for tRNA binding and peptide bond formation. It has been suggested to have peptidyltransferase activity; this is somewhat controversial. Makes several contacts with the 16S rRNA in the 70S ribosome. The polypeptide is Large ribosomal subunit protein uL2 (Staphylococcus haemolyticus (strain JCSC1435)).